Here is a 245-residue protein sequence, read N- to C-terminus: MPRYKLTIEYDGTPFCGWQLQETLPSVQGALEAAVQATCGVPTRVHGSGRTDAGVHATGQVAHCDIAKDFRPDKLRDALNAHLRPNPVAVLEAEIVSDTFEARFSARKRHYRYRIVNRRSNLALEVGRVWRVPQRLDSDAMHAAAQRLIGRHDFTTFRDTECQAKSPEKTLDQLDVVRDGDAVTILTSARSYLHSQVRSMVGSLVWVGQGRWSADDLAAALAARNRAACGVVAPPEGLYLVKVDY.

Asp52 serves as the catalytic Nucleophile. Tyr111 lines the substrate pocket.

The protein belongs to the tRNA pseudouridine synthase TruA family. Homodimer.

It carries out the reaction uridine(38/39/40) in tRNA = pseudouridine(38/39/40) in tRNA. Formation of pseudouridine at positions 38, 39 and 40 in the anticodon stem and loop of transfer RNAs. In Bradyrhizobium sp. (strain BTAi1 / ATCC BAA-1182), this protein is tRNA pseudouridine synthase A.